Here is a 129-residue protein sequence, read N- to C-terminus: Glycine cleavage system H protein (129 aa).

The Lipoyl-binding domain occupies 24-106 (LVRIGISAFA…HGEGWLLLVK (83 aa)). At Lys65 the chain carries N6-lipoyllysine.

It belongs to the GcvH family. As to quaternary structure, the glycine cleavage system is composed of four proteins: P, T, L and H. (R)-lipoate is required as a cofactor.

The glycine cleavage system catalyzes the degradation of glycine. The H protein shuttles the methylamine group of glycine from the P protein to the T protein. This chain is Glycine cleavage system H protein, found in Prochlorococcus marinus (strain SARG / CCMP1375 / SS120).